The primary structure comprises 400 residues: Methylamine dehydrogenase heavy chain (400 aa).

An N-terminal signal peptide occupies residues 1–27 (MTTFQPGRLAGQLAATALLAATCSAFA).

This sequence belongs to the aromatic amine dehydrogenase heavy chain family. As to quaternary structure, tetramer of two light and two heavy chains.

It is found in the periplasm. The catalysed reaction is 2 oxidized [amicyanin] + methylamine + H2O = 2 reduced [amicyanin] + formaldehyde + NH4(+) + 2 H(+). Functionally, methylamine dehydrogenase carries out the oxidation of methylamine. Electrons are passed from methylamine dehydrogenase to amicyanin. In Methylobacillus flagellatus (strain ATCC 51484 / DSM 6875 / VKM B-1610 / KT), this protein is Methylamine dehydrogenase heavy chain (mauB).